We begin with the raw amino-acid sequence, 535 residues long: Proto-oncogene tyrosine-protein kinase Src (535 aa).

The disordered stretch occupies residues 1-56 (MGSNKSKPKDASQRRRSLEPSENVHGAGGAFPASQTPSKPASADGHRGPSAAFVPP). Gly-2 is lipidated: N-myristoyl glycine. Over residues 7–19 (KPKDASQRRRSLE) the composition is skewed to basic and acidic residues. Residues Ser-17, Ser-21, and Ser-74 each carry the phosphoserine modification. An SH3 domain is found at 83 to 144 (GGVTTFVALY…PSNYVAPSDS (62 aa)). One can recognise an SH2 domain in the interval 150-247 (WYFGKITRRE…GLCHRLTTVC (98 aa)). Residue Tyr-186 is modified to Phosphotyrosine. Positions 269 to 522 (LRLEVKLGQG…YLQAFLEDYF (254 aa)) constitute a Protein kinase domain. ATP contacts are provided by residues 275–283 (LGQGCFGEV) and Lys-297. The active-site Proton acceptor is the Asp-388. Position 418 is a phosphotyrosine; by autocatalysis (Tyr-418). Residue Tyr-418 is modified to Phosphotyrosine; by FAK2. A Phosphotyrosine; by CSK modification is found at Tyr-529.

It belongs to the protein kinase superfamily. Tyr protein kinase family. SRC subfamily. Part of a complex comprised of PTPRA, BCAR1, BCAR3 (via SH2 domain) and SRC; the formation of the complex is dependent on integrin mediated-tyrosine phosphorylation of PTPRA. Interacts with CDCP1, TGFB1I1 and TOM1L2. Interacts with DDEF1/ASAP1 via its SH3 domain. Interacts with CCPG1. Interacts with the cytoplasmic domain of MUC1, phosphorylates it and increases binding of MUC1 with beta-catenin. Interacts with RALGPS1 via its SH3 domain. Interacts with CAV2 (tyrosine phosphorylated form). Interacts (via the SH3 domain and the protein kinase domain) with ARRB1; the interaction is independent of the phosphorylation state of SRC C-terminus. Interacts with FCAMR and PXN. Interacts with ARRB2. Interacts with ARRB1. Interacts with SRCIN1. Interacts with NDFIP2 and more weakly with NDFIP1. Interacts with PIK3CA and/or PIK3C2B, PTK2/FAK1, ESR1 (dimethylated on arginine) and FAK. Interacts (via SH2 and SH3 domain) with TNK2. Interacts (via protein kinase domain) with the tyrosine phosphorylated form of RUNX3 (via runt domain). Interacts with TRAF3 (via RING-type zinc finger domain). Interacts with RIGI, MAVS and TBK1. Interacts (via SH2 domain) with RACK1; the interaction is enhanced by tyrosine phosphorylation of RACK1 and inhibits SRC activity. Interacts (via SH2 domain) with the 'Tyr-402' phosphorylated form of PTK2B/PYK2. Interacts (via SH2 domain) with FLT3 (tyrosine phosphorylated). Identified in a complex containing FGFR4, NCAM1, CDH2, PLCG1, FRS2, SRC, SHC1, GAP43 and CTTN. Interacts with EPHB1; activates the MAPK/ERK cascade to regulate cell migration. Interacts with ERBB2 and STAT1. Interacts with PDGFRA (tyrosine phosphorylated). Interacts with CSF1R. Interacts (via SH2 domain) with the 'Tyr-9' phosphorylated form of PDPK1. Interacts with DDR2. Interacts with AMOTL2; this interaction regulates the translocation of phosphorylated SRC to peripheral cell-matrix adhesion sites. Interacts with DDR1 and DAB2. Interacts with TRAP1. Interacts with CBLC; the interaction is enhanced when SRC is phosphorylated at 'Tyr-424'. Interacts with ARHGEF5. Interacts (via cytoplasmic domain) with CEACAM1 (via SH2 domain); this interaction is regulated by trans-homophilic cell adhesion. Interacts with MPP2. Interacts with PRR7. Interacts (via kinase domain and to a lesser extent the SH2 domain) directly with PDLIM4; this interaction results in PTPN13-mediated dephosphorylation of this protein leading to its inactivation. Interacts with P85 (PIK3R1 or PIK3R2). Interacts with HNRNPA2B1. Interacts with IL6ST/gp130. Interacts (via SH3 domain) with PELP1 in the presence of 17-beta-estradiol. Interacts with AMBRA1. In terms of processing, myristoylated at Gly-2, and this is essential for targeting to membranes. Dephosphorylated at Tyr-529 by PTPRJ. Phosphorylated on Tyr-529 by c-Src kinase (CSK). The phosphorylated form is termed pp60c-src. Dephosphorylated by PTPRJ at Tyr-418. Normally maintained in an inactive conformation with the SH2 domain engaged with Tyr-529, the SH3 domain engaged with the SH2-kinase linker, and Tyr-418 dephosphorylated. Dephosphorylation of Tyr-529 as a result of protein tyrosine phosphatase (PTP) action disrupts the intramolecular interaction between the SH2 domain and Tyr-529, Tyr-418 can then become autophosphorylated, resulting in SRC activation. Phosphorylation of Tyr-529 by CSK allows this interaction to reform, resulting in SRC inactivation. CDK5-mediated phosphorylation at Ser-74 targets SRC to ubiquitin-dependent degradation and thus leads to cytoskeletal reorganization. Phosphorylated by PTK2/FAK1; this enhances kinase activity. Phosphorylated by PTK2B/PYK2; this enhances kinase activity. Upon activation of IL6ST by IL6, Tyr-418 is phosphorylated and Tyr-529 dephosphorylated. Post-translationally, displays reduced levels of autophosphorylation at Tyr-418 compared to isoform 2. In terms of processing, displays enhanced levels of autophosphorylation at Tyr-418 compared to isoform 1. S-nitrosylation is important for activation of its kinase activity. Post-translationally, ubiquitinated in response to CDK5-mediated phosphorylation. Ubiquitination mediated by CBLC requires SRC autophosphorylation at Tyr-418 and may lead to lysosomal degradation.

The protein resides in the cell membrane. It is found in the mitochondrion inner membrane. The protein localises to the nucleus. It localises to the cytoplasm. Its subcellular location is the cytoskeleton. The protein resides in the perinuclear region. It is found in the cell junction. The protein localises to the focal adhesion. The enzyme catalyses L-tyrosyl-[protein] + ATP = O-phospho-L-tyrosyl-[protein] + ADP + H(+). Its activity is regulated as follows. Phosphorylation by CSK at Tyr-529 inhibits kinase activity. Inhibitory phosphorylation at Tyr-529 is enhanced by heme. Further phosphorylation by CDK1 partially reactivates CSK-inactivated SRC and facilitates complete reactivation by protein tyrosine phosphatase PTPRC. Integrin engagement stimulates kinase activity. Phosphorylation by PTK2/FAK1 enhances kinase activity. Butein and pseudosubstrate-based peptide inhibitors like CIYKYYF act as inhibitors. Phosphorylation at Tyr-418 increases kinase activity. Functionally, non-receptor protein tyrosine kinase which is activated following engagement of many different classes of cellular receptors including immune response receptors, integrins and other adhesion receptors, receptor protein tyrosine kinases, G protein-coupled receptors as well as cytokine receptors. Participates in signaling pathways that control a diverse spectrum of biological activities including gene transcription, immune response, cell adhesion, cell cycle progression, apoptosis, migration, and transformation. Due to functional redundancy between members of the SRC kinase family, identification of the specific role of each SRC kinase is very difficult. SRC appears to be one of the primary kinases activated following engagement of receptors and plays a role in the activation of other protein tyrosine kinase (PTK) families. Receptor clustering or dimerization leads to recruitment of SRC to the receptor complexes where it phosphorylates the tyrosine residues within the receptor cytoplasmic domains. Plays an important role in the regulation of cytoskeletal organization through phosphorylation of specific substrates such as AFAP1. Phosphorylation of AFAP1 allows the SRC SH2 domain to bind AFAP1 and to localize to actin filaments. Cytoskeletal reorganization is also controlled through the phosphorylation of cortactin (CTTN). When cells adhere via focal adhesions to the extracellular matrix, signals are transmitted by integrins into the cell resulting in tyrosine phosphorylation of a number of focal adhesion proteins, including PTK2/FAK1 and paxillin (PXN). In addition to phosphorylating focal adhesion proteins, SRC is also active at the sites of cell-cell contact adherens junctions and phosphorylates substrates such as beta-catenin (CTNNB1), delta-catenin (CTNND1), and plakoglobin (JUP). Another type of cell-cell junction, the gap junction, is also a target for SRC, which phosphorylates connexin-43 (GJA1). SRC is implicated in regulation of pre-mRNA-processing and phosphorylates RNA-binding proteins such as KHDRBS1. Phosphorylates PKP3 at 'Tyr-195' in response to reactive oxygen species, which may cause the release of PKP3 from desmosome cell junctions into the cytoplasm. Also plays a role in PDGF-mediated tyrosine phosphorylation of both STAT1 and STAT3, leading to increased DNA binding activity of these transcription factors. Involved in the RAS pathway through phosphorylation of RASA1 and RASGRF1. Plays a role in EGF-mediated calcium-activated chloride channel activation. Required for epidermal growth factor receptor (EGFR) internalization through phosphorylation of clathrin heavy chain (CLTC and CLTCL1) at 'Tyr-1477'. Involved in beta-arrestin (ARRB1 and ARRB2) desensitization through phosphorylation and activation of GRK2, leading to beta-arrestin phosphorylation and internalization. Has a critical role in the stimulation of the CDK20/MAPK3 mitogen-activated protein kinase cascade by epidermal growth factor. Might be involved not only in mediating the transduction of mitogenic signals at the level of the plasma membrane but also in controlling progression through the cell cycle via interaction with regulatory proteins in the nucleus. Plays an important role in osteoclastic bone resorption in conjunction with PTK2B/PYK2. Both the formation of a SRC-PTK2B/PYK2 complex and SRC kinase activity are necessary for this function. Recruited to activated integrins by PTK2B/PYK2, thereby phosphorylating CBL, which in turn induces the activation and recruitment of phosphatidylinositol 3-kinase to the cell membrane in a signaling pathway that is critical for osteoclast function. Promotes energy production in osteoclasts by activating mitochondrial cytochrome C oxidase. Phosphorylates DDR2 on tyrosine residues, thereby promoting its subsequent autophosphorylation. Phosphorylates RUNX3 and COX2 on tyrosine residues, TNK2 on 'Tyr-284' and CBL on 'Tyr-738'. Enhances RIGI-elicited antiviral signaling. Phosphorylates PDPK1 at 'Tyr-9', 'Tyr-373' and 'Tyr-376'. Phosphorylates BCAR1 at 'Tyr-226'. Phosphorylates CBLC at multiple tyrosine residues, phosphorylation at 'Tyr-341' activates CBLC E3 activity. Phosphorylates synaptic vesicle protein synaptophysin (SYP). Involved in anchorage-independent cell growth. Required for podosome formation. Mediates IL6 signaling by activating YAP1-NOTCH pathway to induce inflammation-induced epithelial regeneration. Phosphorylates OTUB1, promoting deubiquitination of RPTOR. Its function is as follows. Non-receptor protein tyrosine kinase which phosphorylates synaptophysin with high affinity. In terms of biological role, non-receptor protein tyrosine kinase which shows higher basal kinase activity than isoform 1, possibly due to weakened intramolecular interactions which enhance autophosphorylation of Tyr-418 and subsequent activation. The SH3 domain shows reduced affinity with the linker sequence between the SH2 and kinase domains which may account for the increased basal activity. Displays altered substrate specificity compared to isoform 1, showing weak affinity for synaptophysin and for peptide substrates containing class I or class II SH3 domain-binding motifs. Plays a role in L1CAM-mediated neurite elongation, possibly by acting downstream of L1CAM to drive cytoskeletal rearrangements involved in neurite outgrowth. This Mus musculus (Mouse) protein is Proto-oncogene tyrosine-protein kinase Src.